The sequence spans 61 residues: Small ribosomal subunit protein uS14 (61 aa).

4 residues coordinate Zn(2+): cysteine 24, cysteine 27, cysteine 40, and cysteine 43.

The protein belongs to the universal ribosomal protein uS14 family. Zinc-binding uS14 subfamily. As to quaternary structure, part of the 30S ribosomal subunit. Contacts proteins S3 and S10. It depends on Zn(2+) as a cofactor.

Binds 16S rRNA, required for the assembly of 30S particles and may also be responsible for determining the conformation of the 16S rRNA at the A site. This chain is Small ribosomal subunit protein uS14, found in Halalkalibacterium halodurans (strain ATCC BAA-125 / DSM 18197 / FERM 7344 / JCM 9153 / C-125) (Bacillus halodurans).